The following is a 488-amino-acid chain: Malonate-semialdehyde dehydrogenase 1 (488 aa).

The NAD(+) site is built by F156, K180, E183, R184, S233, and S255. Catalysis depends on C288, which acts as the Nucleophile. E387 lines the NAD(+) pocket.

This sequence belongs to the aldehyde dehydrogenase family. IolA subfamily. In terms of assembly, homotetramer.

The enzyme catalyses 3-oxopropanoate + NAD(+) + CoA + H2O = hydrogencarbonate + acetyl-CoA + NADH + H(+). It carries out the reaction 2-methyl-3-oxopropanoate + NAD(+) + CoA + H2O = propanoyl-CoA + hydrogencarbonate + NADH + H(+). It participates in polyol metabolism; myo-inositol degradation into acetyl-CoA; acetyl-CoA from myo-inositol: step 7/7. Its function is as follows. Catalyzes the oxidation of malonate semialdehyde (MSA) and methylmalonate semialdehyde (MMSA) into acetyl-CoA and propanoyl-CoA, respectively. Is involved in a myo-inositol catabolic pathway. Bicarbonate, and not CO2, is the end-product of the enzymatic reaction. The protein is Malonate-semialdehyde dehydrogenase 1 of Geobacillus kaustophilus (strain HTA426).